Here is a 1925-residue protein sequence, read N- to C-terminus: MFTLTGCRLVEKTQKVENPSVSFASSFPLIPLLLRGKSVQKKQAESKSQIKLHTQSAPFGLCPKDMMLTQAPSSVVRSRNSRNHTVNSGGSCLSASTVAIPAINDSSAAMSACSTISAQPASSMDTQMHSPKKQERVNKRVIWGIEVAEELHWKGWELGKETTRNLVLKNRSLKLQKMKYRPPKTKFFFTVIPQPIFLSPGITLTLPIVFRPLEAKEYMDQLWFEKAEGMFCVGLRATLPCHRLICRPPSLQLPMCAVGDTTEAFFCLDNVGDLPTFFTWEFSSPFQMLPATGLLEPGQASQIKVTFQPLTAVIYEVQATCWYGAGSRQRSSIQLQAVAKCAQLLVSIKHKCPEDQDAEGFQKLLYFGSVAVGCTSERQIRLHNPSAVNAPFRIEISPDELAEDQAFSCPTAHGIVLPGEKKCVSVFFHPKTLDTRTVDYCSIMPSGCASKTLLKVVGFCRGPAVSLQHYCVNFSWVNLGERSEQPLWIENQSDCTAHFQFAIDCLESVFTIRPAFGTLVGKARMTLHCAFQPTHPIICFRRVACLIHHQDPLFLDLMGTCHSDSTKPAILKPQHLTWYRTHLARGLTLYPPDILDAMLKEKKLAQDQNGALMIPIQDLEDMPAPQYPYIPPMTEFFFDGTSDITIFPPPISVEPVEVDFGACPGPEAPNPVPLCLMNHTKGKIMVVWTRRSDCPFWVTPESCDVPPLKSMAMRLHFQPPHPNCLYTVELEAFAIYKVLQSYSNIEEDCTMCPSWCLTVRARGHSYFAGFEHHIPQYSLDVPKLFPAVSSGEPTYRSLLLVNKDCKLLTFSLAPQRGSDVILRPTSGLVAPGAHQIILICTYPEGSSWKQHTFYLQCNASPQYLKEVSMYSREEPLQLKLDTHKSLYFKPTWVGCSSTSPFTFRNPSRLPLQFEWRVSEQHRKLLAVQPSRGLIQPNERLTLTWTFSPLEETKYLFQVGMWVWEAGLSPNANPAATTHYMLRLVGVGLTSSLSAKEKELAFGNVLVNSKQSRFLVLLNDGNCTLYYRLYLEQGSPEAVDNHPLALQLDRTEGSMPPRSQDTICLTACPKQRSQYSWTITYSLLSHRDNKAGEKQELCCVSLVAVYPLLSILDVSSMGSAEGITRKHLWRLFSLDLLNSYLERDPTPCELTYKVPTRHSMSQIPPVLTPLRLDFNFGAAPFKAPPSVVFLALKNSGVVSLDWAFLLPSDQRIDVELWAEQAELNSTELHQMRVQDNCLFSISPKAGSLSPGQEQMVELKYSHLFIGTDHLPVLFKVSHGREILLNFIGVTVKPEQKYVHFTSTTHQFIPIPIGDTLPPRQIYELYNGGSVPVTYEVQTDVLSQVQEKNFDHPIFCCLNPKGEIQPGSTARVLWIFSPIEAKTYTVDVPIHILGWNSALIHFQGVGYNPHMMGDTAPFHNISSWDNSSIHSRLVVPGQNVFLSQSHISLGNIPVQSKCSRLLFLNNISKNEEIAFSWQPSPLDFGEVSVSPMIGVVAPEETVPFVVTLRASVHASFYSADLVCKLYSQQLMRQYHKELQEWKDEKVRQEVEFTITDMKVKKRTCCTACEPARKYKTLPPIKNQQSVSRPASWKLQTPKEEVSWPCPQPPSPGMLCLGLTARAHATDYFLANFFSEFPCHFLHRELPKRKAPREESETSEEKSPNKWGPVSKQKKQLLVDILTTIIRGLLEDKNFHEAVDQSLVEQVPYFRQFWNEQSTKFMDQKNSLYLMPILPVPSSSWEDGKGKQPKEDRPEHYPGLGKKEEGEEEKGEEEEEELEEEEEEEEETEEEELGKEEIEEKEEERDEKEEKVSWAGIGPTPQPESQESMQWQWQQQLNVMVKEEQEQDEKEAIRRLPAFANLQEALLENMIQNILVEASRGEVVLTSRPRVIALPPFCVPRSLTPDTLLPTQQAEVLHPVVPLPTDLP.

A helical transmembrane segment spans residues 188–208 (FFTVIPQPIFLSPGITLTLPI). One can recognise an MSP domain in the interval 877 to 986 (QLKLDTHKSL…THYMLRLVGV (110 aa)). The stretch at 1525–1550 (SQQLMRQYHKELQEWKDEKVRQEVEF) forms a coiled coil. Disordered stretches follow at residues 1645 to 1667 (KRKA…WGPV) and 1736 to 1823 (SSWE…PESQ). Basic and acidic residues-rich tracts occupy residues 1649–1661 (PREE…EKSP) and 1739–1762 (EDGK…KKEE). Residues 1763-1804 (GEEEKGEEEEEELEEEEEEEEETEEEELGKEEIEEKEEERDE) show a composition bias toward acidic residues.

Belongs to the CFAP65 family. Interacts with CFAP47.

The protein localises to the cell projection. It is found in the cilium. The protein resides in the flagellum membrane. It localises to the cytoplasmic vesicle. Its subcellular location is the secretory vesicle. The protein localises to the acrosome membrane. It is found in the cytoplasm. Functionally, plays a role in flagellar formation and sperm motility. The sequence is that of Cilia- and flagella-associated protein 65 from Homo sapiens (Human).